A 108-amino-acid polypeptide reads, in one-letter code: Nucleoid-associated protein PLES_37951 (108 aa).

2 disordered regions span residues 1-25 (MMKG…KMQE) and 87-108 (NQEK…KMPF). The segment covering 87 to 98 (NQEKMSGFTSGM) has biased composition (polar residues).

Belongs to the YbaB/EbfC family. In terms of assembly, homodimer.

Its subcellular location is the cytoplasm. The protein resides in the nucleoid. In terms of biological role, binds to DNA and alters its conformation. May be involved in regulation of gene expression, nucleoid organization and DNA protection. The polypeptide is Nucleoid-associated protein PLES_37951 (Pseudomonas aeruginosa (strain LESB58)).